The primary structure comprises 40 residues: Photosystem II reaction center protein J (40 aa).

Residues 8–28 form a helical membrane-spanning segment; it reads IPLWLIGTVTGIPVIGSIGIF.

It belongs to the PsbJ family. As to quaternary structure, PSII is composed of 1 copy each of membrane proteins PsbA, PsbB, PsbC, PsbD, PsbE, PsbF, PsbH, PsbI, PsbJ, PsbK, PsbL, PsbM, PsbT, PsbX, PsbY, PsbZ, Psb30/Ycf12, at least 3 peripheral proteins of the oxygen-evolving complex and a large number of cofactors. It forms dimeric complexes.

The protein localises to the plastid. Its subcellular location is the chloroplast thylakoid membrane. In terms of biological role, one of the components of the core complex of photosystem II (PSII). PSII is a light-driven water:plastoquinone oxidoreductase that uses light energy to abstract electrons from H(2)O, generating O(2) and a proton gradient subsequently used for ATP formation. It consists of a core antenna complex that captures photons, and an electron transfer chain that converts photonic excitation into a charge separation. This Chloranthus spicatus (Chulantree) protein is Photosystem II reaction center protein J.